The chain runs to 84 residues: uncharacterized protein (84 aa).

This is an uncharacterized protein from Vaccinia virus (strain Copenhagen) (VACV).